A 434-amino-acid polypeptide reads, in one-letter code: Chaperone SurA (434 aa).

The N-terminal stretch at Met-1–Ala-22 is a signal peptide. PpiC domains follow at residues Asp-173–Asp-274 and Ile-283–Glu-383.

Its subcellular location is the periplasm. The enzyme catalyses [protein]-peptidylproline (omega=180) = [protein]-peptidylproline (omega=0). In terms of biological role, chaperone involved in the correct folding and assembly of outer membrane proteins. Recognizes specific patterns of aromatic residues and the orientation of their side chains, which are found more frequently in integral outer membrane proteins. May act in both early periplasmic and late outer membrane-associated steps of protein maturation. The chain is Chaperone SurA from Shewanella sp. (strain MR-7).